A 432-amino-acid polypeptide reads, in one-letter code: Adenylosuccinate synthetase (432 aa).

GTP contacts are provided by residues 13–19 and 41–43; these read GDEGKGK and GHT. Catalysis depends on Asp-14, which acts as the Proton acceptor. Residues Asp-14 and Gly-41 each contribute to the Mg(2+) site. IMP contacts are provided by residues 14–17, 39–42, Thr-130, Arg-144, Gln-225, Thr-240, and Arg-304; these read DEGK and NAGH. His-42 serves as the catalytic Proton donor. 300-306 lines the substrate pocket; that stretch reads ATTGRKR. Residues Arg-306, 332–334, and 415–417 each bind GTP; these read KLD and STG.

This sequence belongs to the adenylosuccinate synthetase family. Homodimer. Mg(2+) is required as a cofactor.

It is found in the cytoplasm. It catalyses the reaction IMP + L-aspartate + GTP = N(6)-(1,2-dicarboxyethyl)-AMP + GDP + phosphate + 2 H(+). It functions in the pathway purine metabolism; AMP biosynthesis via de novo pathway; AMP from IMP: step 1/2. Plays an important role in the de novo pathway of purine nucleotide biosynthesis. Catalyzes the first committed step in the biosynthesis of AMP from IMP. The polypeptide is Adenylosuccinate synthetase (Alteromonas mediterranea (strain DSM 17117 / CIP 110805 / LMG 28347 / Deep ecotype)).